Reading from the N-terminus, the 431-residue chain is 5-methylthioadenosine/S-adenosylhomocysteine deaminase (431 aa).

Zn(2+) is bound by residues His-64 and His-66. The substrate site is built by Glu-93, Arg-145, and His-183. His-210 serves as a coordination point for Zn(2+). Positions 213 and 299 each coordinate substrate. Asp-299 provides a ligand contact to Zn(2+).

Belongs to the metallo-dependent hydrolases superfamily. MTA/SAH deaminase family. Requires Zn(2+) as cofactor.

It carries out the reaction S-adenosyl-L-homocysteine + H2O + H(+) = S-inosyl-L-homocysteine + NH4(+). It catalyses the reaction S-methyl-5'-thioadenosine + H2O + H(+) = S-methyl-5'-thioinosine + NH4(+). Functionally, catalyzes the deamination of 5-methylthioadenosine and S-adenosyl-L-homocysteine into 5-methylthioinosine and S-inosyl-L-homocysteine, respectively. Is also able to deaminate adenosine. The chain is 5-methylthioadenosine/S-adenosylhomocysteine deaminase from Syntrophomonas wolfei subsp. wolfei (strain DSM 2245B / Goettingen).